The following is a 762-amino-acid chain: Polyribonucleotide nucleotidyltransferase (762 aa).

The Mg(2+) site is built by D531 and D537. One can recognise a KH domain in the interval 597–656 (PRVTTIKVPVDKIGEVIGPKGKVINSITEETGAQISIEDDGTVFVGATDGPSAQAAIDKI). The region spanning 668–737 (GERFLGTVVK…KRGKISLVLV (70 aa)) is the S1 motif domain.

The protein belongs to the polyribonucleotide nucleotidyltransferase family. The cofactor is Mg(2+).

The protein localises to the cytoplasm. The enzyme catalyses RNA(n+1) + phosphate = RNA(n) + a ribonucleoside 5'-diphosphate. In terms of biological role, involved in mRNA degradation. Catalyzes the phosphorolysis of single-stranded polyribonucleotides processively in the 3'- to 5'-direction. This is Polyribonucleotide nucleotidyltransferase from Mycobacterium marinum (strain ATCC BAA-535 / M).